We begin with the raw amino-acid sequence, 314 residues long: MTRTLPPGLTATAVVAASSANLGPGFDSMGLAIGLYDEIVVETTESGLVVEVEGEGSGQVPLDGSHLVVRAIERGLRETGVSAPGLIVRCRNDIPHSRGLGSSAAAVVGGLAAANGLAAQTDSTLMSPERLVQVSSEFEGHPDNAAAAVLGGAVVAWTAAGAGDPRYAAAPIRLHPDIAIFAAVPQVRSSTAETRVLLPEHVRHTDARFNLSRAALLVVALTERPDLLMEATEDVLHQPQRAAAMPASAEYLAMLRRCGVPAVLSGAGPAVLALSTETELPAEALRYGADHGFAVKRMSVGHGVSWTSGVAVRT.

Residue Pro95–Ala105 participates in ATP binding.

This sequence belongs to the GHMP kinase family. Homoserine kinase subfamily.

It is found in the cytoplasm. The enzyme catalyses L-homoserine + ATP = O-phospho-L-homoserine + ADP + H(+). Its pathway is amino-acid biosynthesis; L-threonine biosynthesis; L-threonine from L-aspartate: step 4/5. Functionally, catalyzes the ATP-dependent phosphorylation of L-homoserine to L-homoserine phosphate. This Mycolicibacterium vanbaalenii (strain DSM 7251 / JCM 13017 / BCRC 16820 / KCTC 9966 / NRRL B-24157 / PYR-1) (Mycobacterium vanbaalenii) protein is Homoserine kinase.